The following is a 128-amino-acid chain: Large-conductance mechanosensitive channel (128 aa).

2 helical membrane-spanning segments follow: residues 10–30 (FAMRGNVVDMAVGVIIGGAFG) and 76–96 (GMFIQNVFDFIIIAFAIFLMI).

Belongs to the MscL family. Homopentamer.

It localises to the cell inner membrane. Functionally, channel that opens in response to stretch forces in the membrane lipid bilayer. May participate in the regulation of osmotic pressure changes within the cell. The chain is Large-conductance mechanosensitive channel from Actinobacillus succinogenes (strain ATCC 55618 / DSM 22257 / CCUG 43843 / 130Z).